A 270-amino-acid chain; its full sequence is Shikimate dehydrogenase (NADP(+)) (270 aa).

Residues 15–17 (SKS) and threonine 62 each bind shikimate. The active-site Proton acceptor is the lysine 66. Aspartate 78 is a binding site for NADP(+). Shikimate-binding residues include asparagine 87 and aspartate 103. Residues 128-132 (GAGGA), 152-157 (NRTVDR), and leucine 213 contribute to the NADP(+) site. Shikimate is bound at residue tyrosine 215. Glycine 237 serves as a coordination point for NADP(+).

The protein belongs to the shikimate dehydrogenase family. Homodimer.

It carries out the reaction shikimate + NADP(+) = 3-dehydroshikimate + NADPH + H(+). It participates in metabolic intermediate biosynthesis; chorismate biosynthesis; chorismate from D-erythrose 4-phosphate and phosphoenolpyruvate: step 4/7. In terms of biological role, involved in the biosynthesis of the chorismate, which leads to the biosynthesis of aromatic amino acids. Catalyzes the reversible NADPH linked reduction of 3-dehydroshikimate (DHSA) to yield shikimate (SA). In Halorhodospira halophila (strain DSM 244 / SL1) (Ectothiorhodospira halophila (strain DSM 244 / SL1)), this protein is Shikimate dehydrogenase (NADP(+)).